Consider the following 304-residue polypeptide: Nucleotide-binding protein RHA1_ro07174 (304 aa).

24–31 lines the ATP pocket; sequence GLSGAGLQ. 75 to 78 is a GTP binding site; the sequence is DVRS.

This sequence belongs to the RapZ-like family.

Its function is as follows. Displays ATPase and GTPase activities. The sequence is that of Nucleotide-binding protein RHA1_ro07174 from Rhodococcus jostii (strain RHA1).